Reading from the N-terminus, the 398-residue chain is Cell cycle checkpoint control protein RAD9B (398 aa).

Residues 272–281 (RTSSPQSLRL) show a composition bias toward polar residues. The tract at residues 272-359 (RTSSPQSLRL…DMEEGQSPSP (88 aa)) is disordered. A compositionally biased stretch (low complexity) spans 324–336 (SSSAAETRRASAS). A phosphoserine mark is found at Ser349 and Ser358.

This sequence belongs to the rad9 family. In terms of assembly, interacts with HUS1, HUS1B, RAD1, RAD9A and RAD17.

The chain is Cell cycle checkpoint control protein RAD9B (Rad9b) from Rattus norvegicus (Rat).